The chain runs to 345 residues: UDP-3-O-acylglucosamine N-acyltransferase 3 (345 aa).

Histidine 236 acts as the Proton acceptor in catalysis.

Belongs to the transferase hexapeptide repeat family. LpxD subfamily. As to quaternary structure, homotrimer.

The enzyme catalyses a UDP-3-O-[(3R)-3-hydroxyacyl]-alpha-D-glucosamine + a (3R)-hydroxyacyl-[ACP] = a UDP-2-N,3-O-bis[(3R)-3-hydroxyacyl]-alpha-D-glucosamine + holo-[ACP] + H(+). The protein operates within bacterial outer membrane biogenesis; LPS lipid A biosynthesis. Catalyzes the N-acylation of UDP-3-O-acylglucosamine using 3-hydroxyacyl-ACP as the acyl donor. Is involved in the biosynthesis of lipid A, a phosphorylated glycolipid that anchors the lipopolysaccharide to the outer membrane of the cell. The polypeptide is UDP-3-O-acylglucosamine N-acyltransferase 3 (Gloeobacter violaceus (strain ATCC 29082 / PCC 7421)).